A 196-amino-acid chain; its full sequence is MAAIRKKLVVVGDGACGKTCLLIVFSKDEFPEVYVPTVFENYVADIEVDGKQVELALWDTAGQEDYDRLRPLSYPDTDVILMCFSVDSPDSLENIPEKWVPEVKHFCPNVPIILVANKKDLRSDEHVRTELARMKQEPVRTDDGRAMAVRIQAYDYLECSAKTKEGVREVFETATRAALQKRYGSQNGCINCCKVL.

A GTP-binding site is contributed by 12-19 (GDGACGKT). The O-linked (GlcNAc) tyrosine; by Photorhabdus PAU_02230 glycan is linked to tyrosine 34. The Effector region motif lies at 34–42 (YVPTVFENY). A glycan ((Microbial infection) O-linked (Glc) threonine; by C.difficile toxins TcdA and TcdB) is linked at threonine 37. An ADP-ribosylasparagine; by botulinum toxin modification is found at asparagine 41. GTP-binding positions include 59 to 63 (DTAGQ) and 117 to 120 (NKKD). Position 154 is a phosphotyrosine (tyrosine 154). S-palmitoyl cysteine attachment occurs at residues cysteine 189 and cysteine 192. The residue at position 193 (cysteine 193) is a Cysteine methyl ester. Residue cysteine 193 is the site of S-farnesyl cysteine; in plasma membrane form attachment. The S-geranylgeranyl cysteine; in endosomal form moiety is linked to residue cysteine 193. A propeptide spans 194–196 (KVL) (removed in mature form).

It belongs to the small GTPase superfamily. Rho family. As to quaternary structure, binds ROCK1 and ROCK2. Also binds PKN1/PRK1. Interacts with ARGGEF3. Interacts with RTKN. Interacts with AKAP13. Interacts with RIPOR1. Prenylation specifies the subcellular location of RHOB. The farnesylated form is localized to the plasma membrane while the geranylgeranylated form is localized to the endosome. Post-translationally, (Microbial infection) Glycosylated at Tyr-34 by Photorhabdus asymbiotica toxin PAU_02230. Mono-O-GlcNAcylation by PAU_02230 inhibits downstream signaling by an impaired interaction with diverse regulator and effector proteins of Rho and leads to actin disassembly. In terms of processing, (Microbial infection) Glucosylated at Thr-37 by C.difficile toxins TcdA and TcdB in the colonic epithelium. Monoglucosylation completely prevents the recognition of the downstream effector, blocking the GTPases in their inactive form, leading to actin cytoskeleton disruption.

The protein resides in the late endosome membrane. It localises to the cell membrane. Its subcellular location is the nucleus. The protein localises to the cleavage furrow. In terms of biological role, mediates apoptosis in neoplastically transformed cells after DNA damage. Not essential for development but affects cell adhesion and growth factor signaling in transformed cells. Plays a negative role in tumorigenesis as deletion causes tumor formation. Involved in intracellular protein trafficking of a number of proteins. Targets PKN1 to endosomes and is involved in trafficking of the EGF receptor from late endosomes to lysosomes. Also required for stability and nuclear trafficking of AKT1/AKT which promotes endothelial cell survival during vascular development. Serves as a microtubule-dependent signal that is required for the myosin contractile ring formation during cell cycle cytokinesis. Required for genotoxic stress-induced cell death in breast cancer cells. The protein is Rho-related GTP-binding protein RhoB (RHOB) of Homo sapiens (Human).